Consider the following 182-residue polypeptide: Thioredoxin X, chloroplastic (182 aa).

A chloroplast-targeting transit peptide spans 1–67 (MDSIVSSSTI…TRKSSSSVIR (67 aa)). One can recognise a Thioredoxin domain in the interval 68–177 (CGGIKEIGES…LKEYIDGLLN (110 aa)). Active-site nucleophile residues include cysteine 99 and cysteine 102. A disulfide bond links cysteine 99 and cysteine 102.

The protein belongs to the thioredoxin family. As to expression, predominantly expressed in leaves.

The protein resides in the plastid. It localises to the chloroplast stroma. Probable thiol-disulfide oxidoreductase that may participate in various redox reactions. The polypeptide is Thioredoxin X, chloroplastic (ATHX) (Arabidopsis thaliana (Mouse-ear cress)).